The sequence spans 467 residues: Sugar transporter ERD6-like 11 (467 aa).

12 consecutive transmembrane segments (helical) span residues 26 to 46 (ITAC…SYGC), 75 to 95 (FLNV…VILG), 105 to 125 (FFCV…WLDL), 128 to 148 (ISLG…IAEI), 155 to 177 (GAFT…FFGT), 183 to 203 (VMAV…FFIP), 266 to 286 (LVVG…GITY), 301 to 321 (LGSM…LILV), 328 to 348 (PLLL…GVSF), 359 to 379 (LIPI…AFGI), 402 to 422 (IVAL…NFMF), and 428 to 448 (GTFY…WMLV).

This sequence belongs to the major facilitator superfamily. Sugar transporter (TC 2.A.1.1) family.

It is found in the membrane. Sugar transporter. This chain is Sugar transporter ERD6-like 11, found in Arabidopsis thaliana (Mouse-ear cress).